The sequence spans 277 residues: Pantothenate synthetase (277 aa).

Residue 26–33 (MGNLHEGH) participates in ATP binding. Catalysis depends on His-33, which acts as the Proton donor. Gln-57 serves as a coordination point for (R)-pantoate. Beta-alanine is bound at residue Gln-57. 144 to 147 (GKKD) provides a ligand contact to ATP. Gln-150 provides a ligand contact to (R)-pantoate. Residues Gly-173 and 181–184 (LSSR) contribute to the ATP site.

Belongs to the pantothenate synthetase family. As to quaternary structure, homodimer.

It is found in the cytoplasm. The catalysed reaction is (R)-pantoate + beta-alanine + ATP = (R)-pantothenate + AMP + diphosphate + H(+). The protein operates within cofactor biosynthesis; (R)-pantothenate biosynthesis; (R)-pantothenate from (R)-pantoate and beta-alanine: step 1/1. Its function is as follows. Catalyzes the condensation of pantoate with beta-alanine in an ATP-dependent reaction via a pantoyl-adenylate intermediate. In Chromobacterium violaceum (strain ATCC 12472 / DSM 30191 / JCM 1249 / CCUG 213 / NBRC 12614 / NCIMB 9131 / NCTC 9757 / MK), this protein is Pantothenate synthetase.